A 2311-amino-acid chain; its full sequence is Proto-oncogene tyrosine-protein kinase ROS (2311 aa).

The first 24 residues, 1–24 (MRNACLLLNRLGAFYFIWISAAYC), serve as a signal peptide directing secretion. Over 25 to 1873 (SFSKNCQDLC…LAKDTVTSPD (1849 aa)) the chain is Extracellular. N-linked (GlcNAc...) asparagine glycosylation is found at N49, N65, N77, N123, N132, N265, N287, N307, N333, N377, N405, N480, N607, N628, N706, N714, N911, N940, N962, N971, N1110, N1154, N1180, N1233, N1255, N1282, N1316, N1470, N1509, N1588, N1628, N1682, N1696, and N1730. Fibronectin type-III domains are found at residues 110–202 (KPGA…ASGV) and 203–294 (PTTA…PESK). Positions 571–671 (LPTLPRLVTV…EPFRGMTFEE (101 aa)) constitute a Fibronectin type-III 3 domain. Fibronectin type-III domains are found at residues 952 to 1047 (VPES…APEG) and 1051 to 1158 (APAN…SSDI). 4 Fibronectin type-III domains span residues 1459–1569 (DTEK…TLYG), 1570–1669 (VPEG…AKTF), 1671–1766 (TPLS…TTAG), and 1767–1868 (VPSK…AKDT). Residues 1754–1764 (STSSPTSFKTT) are compositionally biased toward low complexity. Residues 1754–1786 (STSSPTSFKTTAGVPSKPGTPKRAEDSKNSVQW) form a disordered region. Positions 1775–1786 (KRAEDSKNSVQW) are enriched in basic and acidic residues. N1792, N1795, and N1822 each carry an N-linked (GlcNAc...) asparagine glycan. The helical transmembrane segment at 1874–1898 (ITAIVAVIGAVVLGLTIIILFGFVW) threads the bilayer. Residues 1899 to 2311 (HQRWKSRKPA…SISSAELTSV (413 aa)) are Cytoplasmic-facing. In terms of domain architecture, Protein kinase spans 1961–2240 (LNLHKLLGSG…KLQEIRHSPL (280 aa)). Residues 1967–1975 (LGSGAFGEV) and K1996 contribute to the ATP site. D2095 (proton acceptor) is an active-site residue. Position 2131 is a phosphotyrosine; by autocatalysis (Y2131).

This sequence belongs to the protein kinase superfamily. Tyr protein kinase family. Insulin receptor subfamily. Interacts with VAV3; constitutive interaction mediating VAV3 phosphorylation. Highest expression in kidney. Also expressed in gonad, thymus, bursa, brain and kidney.

Its subcellular location is the cell membrane. It carries out the reaction L-tyrosyl-[protein] + ATP = O-phospho-L-tyrosyl-[protein] + ADP + H(+). Functionally, orphan receptor tyrosine kinase (RTK) that may activate several downstream signaling pathways related to cell differentiation, proliferation, growth and survival including the PI3 kinase-mTOR signaling pathway. Mediates the phosphorylation of PTPN11, an activator of this pathway. May also phosphorylate and activate the transcription factor STAT3 to control anchorage-independent cell growth. Mediates the phosphorylation and the activation of VAV3, a guanine nucleotide exchange factor regulating cell morphology. May activate other downstream signaling proteins including AKT1, MAPK1, MAPK3, IRS1, and PLCG2. The sequence is that of Proto-oncogene tyrosine-protein kinase ROS (ROS1) from Gallus gallus (Chicken).